Consider the following 100-residue polypeptide: Urease subunit gamma (100 aa).

The protein belongs to the urease gamma subunit family. As to quaternary structure, heterotrimer of UreA (gamma), UreB (beta) and UreC (alpha) subunits. Three heterotrimers associate to form the active enzyme.

It is found in the cytoplasm. It carries out the reaction urea + 2 H2O + H(+) = hydrogencarbonate + 2 NH4(+). Its pathway is nitrogen metabolism; urea degradation; CO(2) and NH(3) from urea (urease route): step 1/1. This Synechococcus sp. (strain CC9605) protein is Urease subunit gamma.